The following is a 393-amino-acid chain: MGPAMDEVTFKSDTVLSDVHLYTPNQRHLMVRLNGMGQPVFLSQFKLLWSRDSWTDSGAEDSGPTDVSTEEMPPAGSGSGHSHEDLSLQAGDDNTIQEGLSVPLDEDGDLDVVRRPRAASDPNPAEPARDKVHPTILAQEEDDLVGDQEYESCPHSIIKIEHTMATPLEDVGKQVWRGALLLADYILFRRDLFQGCTVLELGAGTGLASIVAATMAHTVYCTDVGTDLLAMCQRNVALNSHLTATGGGVVKVKELDWLKDNLCTDPKAPFSWSEEEIADLYDHTTVLLAAEVFYDDDLTNALFNTLSRLVHRLKNACTAIFSVEKRFNFTLRHLDVTCEAYDHFRASLDSLEKLADGRLRFMVEPVEASFPQLLVYERIRQLELWKIVVEPAA.

The interval 54–87 (WTDSGAEDSGPTDVSTEEMPPAGSGSGHSHEDLS) is disordered. Position 120 is a phosphoserine (Ser-120).

This sequence belongs to the methyltransferase superfamily. METTL22 family. Interacts with members of the heat shock protein 90 and 70 families; these proteins probably are methylation substrates.

It localises to the nucleus. The catalysed reaction is L-lysyl-[protein] + 3 S-adenosyl-L-methionine = N(6),N(6),N(6)-trimethyl-L-lysyl-[protein] + 3 S-adenosyl-L-homocysteine + 3 H(+). Functionally, protein N-lysine methyltransferase. Trimethylates KIN at Lys-135 (in vitro). This Mus musculus (Mouse) protein is Methyltransferase-like protein 22 (Mettl22).